The chain runs to 323 residues: Sphingolipid delta(4)-desaturase DES1 (323 aa).

Residue glycine 2 is the site of N-myristoyl glycine attachment. 2 helical membrane-spanning segments follow: residues 41-61 and 68-88; these read SNLIWIVIMMVLTQFVAFYLV and WVLFWAYAFGSCVNHSMTLAI. The Histidine box-1 motif lies at 89-93; the sequence is HEVSH. A helical membrane pass occupies residues 102–122; the sequence is AMWNRWFGIFANLPIGVPYSV. Positions 128 to 132 match the Histidine box-2 motif; the sequence is HMDHH. A run of 3 helical transmembrane segments spans residues 152-172, 184-204, and 209-229; these read FFCTTFRKFIWVILQPLFYAF, YLEIINTVIQITFDIVVYYVL, and LVYMLAASLFGLGLHPISGHF. The Histidine box-3 signature appears at 259 to 263; the sequence is HNEHH. At serine 307 the chain carries Phosphoserine.

The protein belongs to the fatty acid desaturase type 1 family. DEGS subfamily. In terms of assembly, interacts with RLBP1; the interaction increases synthesis of chromophore-precursors by DEGS1. In terms of processing, myristoylation can target the enzyme to the mitochondria leading to an increase in ceramide levels.

The protein resides in the mitochondrion membrane. Its subcellular location is the endoplasmic reticulum membrane. It carries out the reaction an N-acylsphinganine + 2 Fe(II)-[cytochrome b5] + O2 + 2 H(+) = an N-acylsphing-4-enine + 2 Fe(III)-[cytochrome b5] + 2 H2O. It catalyses the reaction all-trans-retinol = 11-cis-retinol. The enzyme catalyses all-trans-retinol = 9-cis-retinol. The catalysed reaction is all-trans-retinol = 13-cis-retinol. It carries out the reaction 11-cis-retinol = 13-cis-retinol. It catalyses the reaction 11-cis-retinol = 9-cis-retinol. Has sphingolipid-delta-4-desaturase activity. Converts D-erythro-sphinganine to D-erythro-sphingosine (E-sphing-4-enine). Catalyzes the equilibrium isomerization of retinols. This is Sphingolipid delta(4)-desaturase DES1 (DEGS1) from Bos taurus (Bovine).